We begin with the raw amino-acid sequence, 195 residues long: Myelin-associated neurite-outgrowth inhibitor (195 aa).

The Cytoplasmic portion of the chain corresponds to 1 to 18 (MNPVYSPGSSGVPYANAK). Residues 19-43 (GIGYPAGFPMGYAAAAPAYSPNMYA) form a helical membrane-spanning segment. The Extracellular portion of the chain corresponds to 44-143 (GPNPAFQPGY…APIPQPRGNG (100 aa)). Residues 144–162 (VAMGMVAGTTMAMSAGTLL) form a helical membrane-spanning segment. The Cytoplasmic segment spans residues 163–195 (TSHYPTPVAPHQVTMPTYRPPGTPTYSYVPPQW).

The protein belongs to the FAM168 family.

It is found in the cytoplasm. Its subcellular location is the perinuclear region. It localises to the cell membrane. The protein localises to the cell projection. The protein resides in the axon. Functionally, inhibitor of neuronal axonal outgrowth. This Xenopus tropicalis (Western clawed frog) protein is Myelin-associated neurite-outgrowth inhibitor (fam168b).